Here is a 352-residue protein sequence, read N- to C-terminus: Glutamine synthetase (352 aa).

The 80-residue stretch at 3 to 82 folds into the GS beta-grasp domain; that stretch reads YQAEYIWIDG…LCEVQLTDFT (80 aa). Positions 87–352 constitute a GS catalytic domain; that stretch reads TRAAALGVAE…TTPAPAEASV (266 aa). Mg(2+) contacts are provided by Glu-108 and Glu-110. Glu-164 contributes to the ATP binding site. Positions 169 and 176 each coordinate Mg(2+). Glu-272 lines the L-glutamate pocket.

The protein belongs to the glutamine synthetase family. Homooctamer and homotetramer. Mg(2+) serves as cofactor.

The protein localises to the cytoplasm. The enzyme catalyses L-glutamate + NH4(+) + ATP = L-glutamine + ADP + phosphate + H(+). Its function is as follows. Catalyzes the ATP-dependent biosynthesis of glutamine from glutamate and ammonia. The polypeptide is Glutamine synthetase (Frankia alni).